Consider the following 390-residue polypeptide: tRNA-specific 2-thiouridylase MnmA (390 aa).

ATP is bound by residues Gly29–Ser36 and Leu55. Cys116 serves as the catalytic Nucleophile. A disulfide bridge connects residues Cys116 and Cys225. Gly141 serves as a coordination point for ATP. The interaction with tRNA stretch occupies residues Lys175 to Gln177. Catalysis depends on Cys225, which acts as the Cysteine persulfide intermediate. The interaction with tRNA stretch occupies residues Arg330–Tyr331.

Belongs to the MnmA/TRMU family.

It is found in the cytoplasm. It carries out the reaction S-sulfanyl-L-cysteinyl-[protein] + uridine(34) in tRNA + AH2 + ATP = 2-thiouridine(34) in tRNA + L-cysteinyl-[protein] + A + AMP + diphosphate + H(+). Its function is as follows. Catalyzes the 2-thiolation of uridine at the wobble position (U34) of tRNA, leading to the formation of s(2)U34. The polypeptide is tRNA-specific 2-thiouridylase MnmA (Prochlorococcus marinus (strain MIT 9515)).